The following is a 405-amino-acid chain: Argininosuccinate synthase (405 aa).

ATP-binding positions include 12–20 (AYSGGLDTS) and Ala-40. L-citrulline contacts are provided by Tyr-92 and Ser-97. Gly-122 is an ATP binding site. 3 residues coordinate L-aspartate: Thr-124, Asn-128, and Asp-129. An L-citrulline-binding site is contributed by Asn-128. Arg-132, Ser-181, Ser-190, Glu-266, and Tyr-278 together coordinate L-citrulline.

It belongs to the argininosuccinate synthase family. Type 1 subfamily. In terms of assembly, homotetramer.

It is found in the cytoplasm. The enzyme catalyses L-citrulline + L-aspartate + ATP = 2-(N(omega)-L-arginino)succinate + AMP + diphosphate + H(+). The protein operates within amino-acid biosynthesis; L-arginine biosynthesis; L-arginine from L-ornithine and carbamoyl phosphate: step 2/3. The polypeptide is Argininosuccinate synthase (Edwardsiella ictaluri (strain 93-146)).